The sequence spans 164 residues: Phosphopantetheine adenylyltransferase (164 aa).

Substrate is bound at residue S9. ATP-binding positions include 9 to 10 (SF) and H17. Residues K41, L73, and R87 each coordinate substrate. ATP contacts are provided by residues E98 and 122 to 128 (YSFLSSS).

The protein belongs to the bacterial CoaD family. Homohexamer. The cofactor is Mg(2+).

The protein localises to the cytoplasm. It catalyses the reaction (R)-4'-phosphopantetheine + ATP + H(+) = 3'-dephospho-CoA + diphosphate. Its pathway is cofactor biosynthesis; coenzyme A biosynthesis; CoA from (R)-pantothenate: step 4/5. Functionally, reversibly transfers an adenylyl group from ATP to 4'-phosphopantetheine, yielding dephospho-CoA (dPCoA) and pyrophosphate. This is Phosphopantetheine adenylyltransferase from Thermobifida fusca (strain YX).